Reading from the N-terminus, the 501-residue chain is Cryptochrome-1 (501 aa).

The 130-residue stretch at 5-134 (KKTIVWFRRD…SVQSYNGDLC (130 aa)) folds into the Photolyase/cryptochrome alpha/beta domain. Residues Tyr231 and 243–247 (TSLLS) contribute to the FAD site. Residue Arg356 coordinates ATP. FAD contacts are provided by Asp386 and Asp388. Asp405 lines the ATP pocket.

Belongs to the DNA photolyase class-1 family. As to quaternary structure, homodimer. Requires FAD as cofactor. The cofactor is (6R)-5,10-methylene-5,6,7,8-tetrahydrofolate.

In terms of biological role, mediates blue light-induced gene expression in addition to its role in blue light-dependent inhibition of stem growth. This chain is Cryptochrome-1 (PHR1), found in Sinapis alba (White mustard).